Consider the following 232-residue polypeptide: Large ribosomal subunit protein uL1 (232 aa).

The protein belongs to the universal ribosomal protein uL1 family. In terms of assembly, part of the 50S ribosomal subunit.

Its function is as follows. Binds directly to 23S rRNA. The L1 stalk is quite mobile in the ribosome, and is involved in E site tRNA release. Protein L1 is also a translational repressor protein, it controls the translation of the L11 operon by binding to its mRNA. The chain is Large ribosomal subunit protein uL1 from Chlamydia abortus (strain DSM 27085 / S26/3) (Chlamydophila abortus).